Reading from the N-terminus, the 983-residue chain is Receptor-like protein 19 (983 aa).

Residues 1 to 25 (MMKGYITLSFLIILIFNFLDEFAAS) form the signal peptide. Residues 26 to 937 (TRHLCDPDQS…EEDEEEVISW (912 aa)) are Extracellular-facing. N-linked (GlcNAc...) asparagine glycosylation is found at asparagine 66 and asparagine 102. LRR repeat units lie at residues 82-108 (FGDVIELDLSFSCLRGQLNSNSSLFRL), 111-135 (LRFLTTLDLSNNDFIGQIPSSLETL), 136-159 (SNLTTLDLSRNHFSGRIPSSIGNL), 161-183 (HLIFVDFSHNNFSGQIPSSLGYL), 184-207 (SHLTSFNLSYNNFSGRVPSSIGNL), 209-231 (YLTTLRLSRNSFFGELPSSLGSL), 232-255 (FHLTDLILDTNHFVGKIPSSLGNL), 256-281 (SHLTSIDLHKNNFVGEIPFSLGNLSC), 283-302 (TSFILSDNNIVGEIPSSFGN), 303-327 (LNQLDILNVKSNKLSGSFPIALLNL), 328-351 (RKLSTLSLFNNRLTGTLPSNMSSL), 353-375 (NLKLFDATENHFTGPLPSSLFNI), 376-399 (PSLKTITLENNQLNGSLGFGNISS), 401-424 (SNLTVLRLGNNNFRGPIHRSISKL), 425-448 (VNLKELDLSNYNTQGLVDFTIFSH), 450-474 (KSIEYLNLSHLNTTTTIDMYEILSS), 475-498 (FKLLDTLDLSGSHVSTTNKSSLSN), 501-524 (LVLISQLYLSGCGITEFPKFLRSQ), 525-548 (ELMLTLDISNNKIKGQVPGWLWML), 550-571 (VLNYVNLSNNTFIGFERSTKLG), 578-602 (PPAMRQLFCSNNNFTGNIPSFICEL), 603-628 (PYLSTLDFSNNKFNGSIPTCMGNIQS), 629-652 (PYLQALNLRHNRLSGLLPENIFES), 654-674 (ISLDVGHNQLVGKLPRSLSHI), 675-700 (SSLGLLNVESNKISDTFPLWLSSLQE), 702-720 (QVLVLRSNAFYGPIEKTQF), 721-744 (SKLRIIDISGNQFNGTLPANFFVN), 793-817 (LKVFTVIDFSGNKFEGEIPKSIGLL), 818-840 (KELHVLNLSNNALSGHIASSMGN), 841-865 (LMALESLDVSQNKLSGEIPQELGKL), and 867-890 (YLAYMNFSHNQLVGLLPGGTQFQT). 6 N-linked (GlcNAc...) asparagine glycosylation sites follow: asparagine 137, asparagine 158, asparagine 171, asparagine 190, asparagine 195, and asparagine 206. 2 N-linked (GlcNAc...) asparagine glycosylation sites follow: asparagine 254 and asparagine 278. A glycan (N-linked (GlcNAc...) asparagine) is linked at asparagine 347. Residues asparagine 389, asparagine 396, and asparagine 402 are each glycosylated (N-linked (GlcNAc...) asparagine). 4 N-linked (GlcNAc...) asparagine glycosylation sites follow: asparagine 456, asparagine 461, asparagine 492, and asparagine 498. N-linked (GlcNAc...) asparagine glycosylation is found at asparagine 555, asparagine 558, asparagine 590, and asparagine 616. N-linked (GlcNAc...) asparagine glycosylation is found at asparagine 734 and asparagine 744. Asparagine 824 carries an N-linked (GlcNAc...) asparagine glycan. Asparagine 872 carries N-linked (GlcNAc...) asparagine glycosylation. A helical transmembrane segment spans residues 938-958 (IAAVIGFILGTALGLTFGCIL). Over 959 to 983 (FSYKPDWFKNPFVRDKRRNIGTITH) the chain is Cytoplasmic.

Belongs to the RLP family.

The protein resides in the cell membrane. This Arabidopsis thaliana (Mouse-ear cress) protein is Receptor-like protein 19.